Here is a 609-residue protein sequence, read N- to C-terminus: Granule-bound starch synthase 1, chloroplastic/amyloplastic (609 aa).

Residues 1–77 (MSALTTSQLA…SRRFPSVVVY (77 aa)) constitute a chloroplast transit peptide. The segment at 29 to 67 (RHGFQGLKPRSPAGGDATSLSVTTSARATPKQQRSVQRG) is disordered. Polar residues predominate over residues 46 to 66 (TSLSVTTSARATPKQQRSVQR). Lys97 is an ADP-alpha-D-glucose binding site. Positions 100, 408, 413, 462, and 493 each coordinate ADP. Cys337 and Cys529 are disulfide-bonded.

This sequence belongs to the glycosyltransferase 1 family. Bacterial/plant glycogen synthase subfamily.

Its subcellular location is the plastid. The protein resides in the chloroplast. It is found in the amyloplast. The enzyme catalyses an NDP-alpha-D-glucose + [(1-&gt;4)-alpha-D-glucosyl](n) = [(1-&gt;4)-alpha-D-glucosyl](n+1) + a ribonucleoside 5'-diphosphate + H(+). It functions in the pathway glycan biosynthesis; starch biosynthesis. In terms of biological role, required for the synthesis of amylose in endosperm. In Oryza sativa subsp. indica (Rice), this protein is Granule-bound starch synthase 1, chloroplastic/amyloplastic (WAXY).